The primary structure comprises 124 residues: ATP synthase epsilon chain (124 aa).

Belongs to the ATPase epsilon chain family. As to quaternary structure, F-type ATPases have 2 components, CF(1) - the catalytic core - and CF(0) - the membrane proton channel. CF(1) has five subunits: alpha(3), beta(3), gamma(1), delta(1), epsilon(1). CF(0) has three main subunits: a, b and c.

It localises to the cell membrane. Its function is as follows. Produces ATP from ADP in the presence of a proton gradient across the membrane. The protein is ATP synthase epsilon chain of Corynebacterium glutamicum (strain ATCC 13032 / DSM 20300 / JCM 1318 / BCRC 11384 / CCUG 27702 / LMG 3730 / NBRC 12168 / NCIMB 10025 / NRRL B-2784 / 534).